Reading from the N-terminus, the 197-residue chain is Small ribosomal subunit protein eS1 (197 aa).

Belongs to the eukaryotic ribosomal protein eS1 family.

This Sulfolobus acidocaldarius (strain ATCC 33909 / DSM 639 / JCM 8929 / NBRC 15157 / NCIMB 11770) protein is Small ribosomal subunit protein eS1.